The chain runs to 567 residues: DNA-binding protein REPIN1 (567 aa).

The disordered stretch occupies residues 17–52; that stretch reads PRLLSGPSQESPQTLGKESRGLRQQGTSVAQSGAQA. Residues 22 to 50 show a composition bias toward polar residues; that stretch reads GPSQESPQTLGKESRGLRQQGTSVAQSGA. Residue Ser27 is modified to Phosphoserine. Thr30 is modified (phosphothreonine). At Lys33 the chain carries N6-acetyllysine. The C2H2-type 1; atypical zinc finger occupies 57–79; that stretch reads HRCAHCRRHFPGWVALWLHTRRC. C2H2-type zinc fingers lie at residues 85–107, 116–138, 145–168, 177–199, 236–258, 264–286, and 292–314; these read LPCP…RQVH, FACH…LRAH, IACP…RRCH, FICG…KRVH, FQCA…RRVH, HQCP…RRIH, and YPCK…SKIH. The residue at position 276 (Lys276) is an N6-acetyllysine. Residues 305–315 show a composition bias toward basic residues; it reads PNLLSHSKIHK. The segment at 305-372 is disordered; it reads PNLLSHSKIH…HPQDPIEAPP (68 aa). Positions 345–362 are enriched in pro residues; that stretch reads PAVPLKPAQEPPPGAPPE. 7 consecutive C2H2-type zinc fingers follow at residues 375 to 397, 403 to 425, 431 to 453, 459 to 481, 487 to 509, 515 to 537, and 543 to 565; these read YSCD…QRQH, FTCA…SRVH, FACE…RRDH, FVCP…RRIH, YVCP…RRIH, YACP…RKSH, and FCCA…QKKH.

As to quaternary structure, homodimers and homomultimers. Found in a complex with RIP60 and RIP100. In terms of tissue distribution, expressed in adipose tissue and bone tissue.

It is found in the nucleus. The protein resides in the cytoplasm. The protein localises to the cytosol. Functionally, sequence-specific double-stranded DNA-binding protein. Binds ATT-rich and T-rich DNA sequences and facilitates DNA bending. May regulate the expression of genes involved in cellular fatty acid import, including SCARB1/CD36, and genes involved in lipid droplet formation. May regulate the expression of LCN2, and thereby influence iron metabolism and apoptosis-related pathways. May regulate the expression of genes involved in glucose transport. This is DNA-binding protein REPIN1 (REPIN1) from Homo sapiens (Human).